The chain runs to 443 residues: CBL-interacting protein kinase 29 (443 aa).

Residues 32-292 form the Protein kinase domain; that stretch reads YELGGLLGRG…TEEIITHPWF (261 aa). Residues 38-46 and lysine 61 each bind ATP; that span reads LGRGASAKV. Residue aspartate 164 is the Proton acceptor of the active site. The tract at residues 182–207 is activation loop; it reads DFGLGAVADGALHHTLCGTPAYVAPE. One can recognise an NAF domain in the interval 313–347; it reads AKFKTEFKEDDMARDMTAFDILACSPGSDLSGLFG. A PPI region spans residues 350-379; sequence PGKERVFVGEPAAAVLSRVEEAGKKEGYMV.

This sequence belongs to the protein kinase superfamily. CAMK Ser/Thr protein kinase family. SNF1 subfamily. It depends on Mn(2+) as a cofactor.

The catalysed reaction is L-seryl-[protein] + ATP = O-phospho-L-seryl-[protein] + ADP + H(+). It carries out the reaction L-threonyl-[protein] + ATP = O-phospho-L-threonyl-[protein] + ADP + H(+). CIPK serine-threonine protein kinases interact with CBL proteins. Binding of a CBL protein to the regulatory NAF domain of CIPK protein lead to the activation of the kinase in a calcium-dependent manner. This Oryza sativa subsp. japonica (Rice) protein is CBL-interacting protein kinase 29 (CIPK29).